Consider the following 761-residue polypeptide: Protein transport protein SEC23 C (761 aa).

Zn(2+)-binding residues include Cys-60, Cys-63, Cys-82, and Cys-85. The segment at 60–85 is zinc finger-like; sequence CRTCRSVLNPYSVVDFSACNWGCPFC.

The protein belongs to the SEC23/SEC24 family. SEC24 subfamily. In terms of assembly, component of the coat protein complex II (COPII), composed of at least five proteins: the Sec23/24 complex, the Sec13/31 complex and Sar1.

Its subcellular location is the cytoplasmic vesicle. It is found in the COPII-coated vesicle membrane. The protein localises to the endoplasmic reticulum membrane. It localises to the membrane. Functionally, component of the coat protein complex II (COPII) which promotes the formation of transport vesicles from the endoplasmic reticulum (ER). The coat has two main functions, the physical deformation of the endoplasmic reticulum membrane into vesicles and the selection of cargo molecules. The chain is Protein transport protein SEC23 C from Arabidopsis thaliana (Mouse-ear cress).